The sequence spans 320 residues: L-lactate dehydrogenase 2 (320 aa).

The NAD(+) site is built by Val16, Asp37, Lys42, and Tyr69. Arg94 is a substrate binding site. Residues Ser107, 124-126, and Thr149 contribute to the NAD(+) site; that span reads VTN. Residue 126 to 129 participates in substrate binding; the sequence is NPVD. Position 154–157 (154–157) interacts with substrate; the sequence is DTAR. Beta-D-fructose 1,6-bisphosphate is bound by residues Arg159 and His174. His181 serves as the catalytic Proton acceptor. Thr235 is a substrate binding site.

Belongs to the LDH/MDH superfamily. LDH family. In terms of assembly, homotetramer.

The protein resides in the cytoplasm. It catalyses the reaction (S)-lactate + NAD(+) = pyruvate + NADH + H(+). The protein operates within fermentation; pyruvate fermentation to lactate; (S)-lactate from pyruvate: step 1/1. With respect to regulation, allosterically activated by fructose 1,6-bisphosphate (FBP). In terms of biological role, catalyzes the conversion of lactate to pyruvate. This is L-lactate dehydrogenase 2 from Clostridium acetobutylicum (strain ATCC 824 / DSM 792 / JCM 1419 / IAM 19013 / LMG 5710 / NBRC 13948 / NRRL B-527 / VKM B-1787 / 2291 / W).